A 504-amino-acid polypeptide reads, in one-letter code: MNIKPEEITSIIKKEIEKYEKQIKTVDSGTIIQVGDGVSRVYGLDDCMEGELLEFPNDVYGMALNLEQDNVGCVLLGNEEGIKEGDIVKGSGKIVEVPVGEALIGRVVNSLGEELDGKGPINTNQTRPIEVKAPSIIDRSSVNEPLQTGIKAIDSMIPIGKGQRELIIGDRQTGKTALVIDTILNQKGKDVICIYVAIGQKQSTVAHIVNTLTEMGAMDYSIIVSSTAADSAPLQYLAPYAGCSIGEYFMNQGKDVLIVYDDLSKHAVAYRTMSLLLRRPPGREAYPGDVFYIHSRLLERAAKLSEENGGGSLTALPIIETLAGDITAYIPTNVISITDGQIFLESDLFNSGQRPAVNAGISVSRVGGNAQIKAMKQVTGTLRLELAQYRELAAFAQFGSDLDKDSKKRLEKGKRLVEILKQDQYKPLEVEKQVIILYTAVNDFLSDIKVEDIKKFEKELLEYVDTHYRELGRQIAEEKVLTDEIKAKLEVAIVEFKKIFLQEA.

169–176 is a binding site for ATP; the sequence is GDRQTGKT.

This sequence belongs to the ATPase alpha/beta chains family. As to quaternary structure, F-type ATPases have 2 components, CF(1) - the catalytic core - and CF(0) - the membrane proton channel. CF(1) has five subunits: alpha(3), beta(3), gamma(1), delta(1), epsilon(1). CF(0) has three main subunits: a(1), b(2) and c(9-12). The alpha and beta chains form an alternating ring which encloses part of the gamma chain. CF(1) is attached to CF(0) by a central stalk formed by the gamma and epsilon chains, while a peripheral stalk is formed by the delta and b chains.

The protein localises to the cell membrane. It catalyses the reaction ATP + H2O + 4 H(+)(in) = ADP + phosphate + 5 H(+)(out). Produces ATP from ADP in the presence of a proton gradient across the membrane. The alpha chain is a regulatory subunit. The chain is ATP synthase subunit alpha from Clostridium botulinum (strain Alaska E43 / Type E3).